The following is a 375-amino-acid chain: Outer membrane porin C (375 aa).

Positions 1 to 21 (MKVKVLSLLVPALLVAGAANA) are cleaved as a signal peptide. A beta stranded transmembrane segment spans residues 22 to 27 (AEVYNK). At 28–29 (DG) the chain is on the periplasmic side. The beta stranded transmembrane segment at 30 to 44 (NKLDLYGKVDGLHYF) threads the bilayer. The Extracellular portion of the chain corresponds to 45–50 (SDDKSV). A beta stranded transmembrane segment spans residues 51–66 (DGDQTYMRLGFKGETQ). Residues 67 to 70 (VTDQ) are Periplasmic-facing. The beta stranded transmembrane segment at 71-82 (LTGYGQWEYQIQ) threads the bilayer. The Extracellular segment spans residues 83–91 (GNAPESENN). The chain crosses the membrane as a beta stranded span at residues 92–103 (SWTRVAFAGLKF). The Periplasmic portion of the chain corresponds to 104–105 (QD). A beta stranded transmembrane segment spans residues 106-113 (IGSFDYGR). The Extracellular portion of the chain corresponds to 114 to 146 (NYGVVYDVTSWTDVLPEFGGDTYGSDNFMQQRG). A beta stranded transmembrane segment spans residues 147-156 (NGFATYRNTD). At 157-163 (FFGLVDG) the chain is on the periplasmic side. Residues 164-172 (LNFAVQYQG) form a beta stranded membrane-spanning segment. Residues 173–201 (QNGSVSGENDPDFTGHGITNNGRKALRQN) lie on the Extracellular side of the membrane. A beta stranded transmembrane segment spans residues 202-212 (GDGVGGSITYD). The Periplasmic segment spans residues 213 to 215 (YEG). The chain crosses the membrane as a beta stranded span at residues 216 to 226 (FGVGAAVSSSK). Topologically, residues 227-241 (RTWDQNNTGLIGTGD) are extracellular. The chain crosses the membrane as a beta stranded span at residues 242-254 (RAETYTGGLKYDA). The Periplasmic portion of the chain corresponds to 255–256 (NN). Residues 257 to 267 (IYLAAQYTQTY) traverse the membrane as a beta stranded segment. The Extracellular segment spans residues 268–279 (NATRVGSLGWAN). The chain crosses the membrane as a beta stranded span at residues 280 to 292 (KAQNFEAVAQYQF). Topologically, residues 293-294 (DF) are periplasmic. A beta stranded transmembrane segment spans residues 295-309 (GLRPSVAYLQSKGKN). Over 310–320 (LGVVAGRNYDD) the chain is Extracellular. Residues 321 to 335 (EDILKYVDVGATYYF) form a beta stranded membrane-spanning segment. Over 336-338 (NKN) the chain is Periplasmic. A beta stranded transmembrane segment spans residues 339–348 (MSTYVDYKIN). The Extracellular portion of the chain corresponds to 349 to 364 (LLDDNQFTRAAGINTD). A beta stranded transmembrane segment spans residues 365 to 375 (DIVALGLVYQF).

It belongs to the Gram-negative porin family. Homotrimer. Forms mixed heterotrimers with OmpF; other mixed heterotrimers are also probable. The N- and C-termini are two parts of the same strand. Extracellular loop 3 folds back into the lumen of the barrel forming a constriction zone that controls the pore size, while the trimer interface is formed by the packing of hydrophobic residues on the outer edges of beta strands 1 to 5 and further stabilized by extracellular loop 2 which reaches into the neighboring monomer.

The protein resides in the cell outer membrane. Its function is as follows. Forms pores that allow passive diffusion of small molecules across the outer membrane, including some antibiotics. Variation of the residues in the constriction zone modifies the transverse electric field in the zone, altering antibiotic resistance. (Microbial infection) Is not susceptible to CdiA-EC536-mediated toxicity, which uses OmpC-OmpF heterotrimers of some strains as its outer membrane receptor. Mutagenesis of extracellular loops L4 or L5 of this protein confers susceptibility to the toxin. In Escherichia coli O6:H1 (strain CFT073 / ATCC 700928 / UPEC), this protein is Outer membrane porin C (ompC).